A 362-amino-acid polypeptide reads, in one-letter code: DLA class I histocompatibility antigen, A9/A9 alpha chain (362 aa).

The signal sequence occupies residues 1–24 (MEVVMPRALLVLLSAALALTPTRA). Residues 25-114 (GSHSLRYFYT…LRGYYNQSEA (90 aa)) are alpha-1. The Extracellular segment spans residues 25–306 (GSHSLRYFYT…RRWEPSPLST (282 aa)). An N-linked (GlcNAc...) asparagine glycan is attached at Asn110. An alpha-2 region spans residues 115-207 (GSHTRQTMYG…EMGKETLLRA (93 aa)). Cystine bridges form between Cys125–Cys189 and Cys228–Cys284. The alpha-3 stretch occupies residues 208–299 (DPPSTRVTHH…GLPEPITRRW (92 aa)). The 87-residue stretch at 210–296 (PSTRVTHHPV…QHEGLPEPIT (87 aa)) folds into the Ig-like C1-type domain. Residues 300–306 (EPSPLST) are connecting peptide. The chain crosses the membrane as a helical span at residues 307-329 (IVIVSIAALVLLVVAGVIGAVIW). The Cytoplasmic portion of the chain corresponds to 330–362 (RKQRSGGKGPGYSHAARDDSAQGSDVSLTAPRV). The interval 333–362 (RSGGKGPGYSHAARDDSAQGSDVSLTAPRV) is disordered.

This sequence belongs to the MHC class I family. In terms of assembly, heterodimer of an alpha chain and a beta chain (beta-2-microglobulin).

It is found in the membrane. Functionally, involved in the presentation of foreign antigens to the immune system. The sequence is that of DLA class I histocompatibility antigen, A9/A9 alpha chain from Canis lupus familiaris (Dog).